Consider the following 466-residue polypeptide: Uronate isomerase (466 aa).

The protein belongs to the metallo-dependent hydrolases superfamily. Uronate isomerase family.

It carries out the reaction D-glucuronate = D-fructuronate. The catalysed reaction is aldehydo-D-galacturonate = keto-D-tagaturonate. Its pathway is carbohydrate metabolism; pentose and glucuronate interconversion. The sequence is that of Uronate isomerase from Caldanaerobacter subterraneus subsp. tengcongensis (strain DSM 15242 / JCM 11007 / NBRC 100824 / MB4) (Thermoanaerobacter tengcongensis).